A 230-amino-acid chain; its full sequence is Ribonuclease 3 (230 aa).

One can recognise an RNase III domain in the interval 8–135; sequence IVELKEKLGI…LIGAVYLQTN (128 aa). Glu-48 contributes to the Mg(2+) binding site. Residue Asp-52 is part of the active site. Residues Asp-121 and Glu-124 each contribute to the Mg(2+) site. Residue Glu-124 is part of the active site. One can recognise a DRBM domain in the interval 161–230; it reads DYKTMIQELV…AHFAFQKLSK (70 aa).

This sequence belongs to the ribonuclease III family. As to quaternary structure, homodimer. Mg(2+) serves as cofactor.

It localises to the cytoplasm. The enzyme catalyses Endonucleolytic cleavage to 5'-phosphomonoester.. In terms of biological role, digests double-stranded RNA. Involved in the processing of primary rRNA transcript to yield the immediate precursors to the large and small rRNAs (23S and 16S). Processes some mRNAs, and tRNAs when they are encoded in the rRNA operon. Processes pre-crRNA and tracrRNA of type II CRISPR loci if present in the organism. This chain is Ribonuclease 3, found in Natranaerobius thermophilus (strain ATCC BAA-1301 / DSM 18059 / JW/NM-WN-LF).